A 175-amino-acid chain; its full sequence is Nucleoside-triphosphatase THEP1 (175 aa).

ATP contacts are provided by residues Gly-16–Thr-23 and Val-103–Gly-110.

This sequence belongs to the THEP1 NTPase family.

It catalyses the reaction a ribonucleoside 5'-triphosphate + H2O = a ribonucleoside 5'-diphosphate + phosphate + H(+). Has nucleotide phosphatase activity towards ATP, GTP, CTP, TTP and UTP. May hydrolyze nucleoside diphosphates with lower efficiency. This chain is Nucleoside-triphosphatase THEP1, found in Pyrobaculum calidifontis (strain DSM 21063 / JCM 11548 / VA1).